We begin with the raw amino-acid sequence, 461 residues long: Ribosomal protein uS12 methylthiotransferase RimO (461 aa).

The 116-residue stretch at 13–128 folds into the MTTase N-terminal domain; the sequence is PKVGFVSLGC…VMQHVHMHLP (116 aa). [4Fe-4S] cluster is bound by residues cysteine 22, cysteine 58, cysteine 87, cysteine 159, cysteine 163, and cysteine 166. Residues 145–390 enclose the Radical SAM core domain; that stretch reads LTPRHYAYLK…MEVAEEVSAK (246 aa). Positions 393–461 constitute a TRAM domain; that stretch reads AKKVGKTLKV…ADGHDLWGEV (69 aa).

It belongs to the methylthiotransferase family. RimO subfamily. Requires [4Fe-4S] cluster as cofactor.

The protein resides in the cytoplasm. The catalysed reaction is L-aspartate(89)-[ribosomal protein uS12]-hydrogen + (sulfur carrier)-SH + AH2 + 2 S-adenosyl-L-methionine = 3-methylsulfanyl-L-aspartate(89)-[ribosomal protein uS12]-hydrogen + (sulfur carrier)-H + 5'-deoxyadenosine + L-methionine + A + S-adenosyl-L-homocysteine + 2 H(+). Functionally, catalyzes the methylthiolation of an aspartic acid residue of ribosomal protein uS12. In Paraburkholderia xenovorans (strain LB400), this protein is Ribosomal protein uS12 methylthiotransferase RimO.